Reading from the N-terminus, the 338-residue chain is MSKLFSEYKLKDVTLKNRIVMSPMCMYSVENKDGIATDFHFAHYVSRAAGGTGLVILEATAVQEVGRISEFDLGLWNDEQVPALKHLVDGLHSHGAKAGIQLAHAGRKAVLPGEIVAPSAIAYDEKSAKPVELTKEAIKEVVADFKRAAYRAKEAGFDVIEIHAAHGYLIHQFLSPITNRREDNYGGPAGNRYKILSDIIKAVKEVWDGPIIVRVSATDYAHGGLQLEDYIPFAKWMKADGVELIDVSTGGLVNVAPPVFPGYQVPFADEIRRGAGIATGVLGLITRGEQAEEILCNERADLIIIGRELLRNPYFAKDAALSLGETIEGPKQYSRAWK.

22–25 serves as a coordination point for FMN; the sequence is SPMC. Residue Tyr-27 coordinates substrate. The FMN site is built by Ala-59 and Gln-101. 163–166 contacts substrate; sequence HAAH. FMN-binding positions include Arg-214 and 306-307; that span reads GR.

This sequence belongs to the NADH:flavin oxidoreductase/NADH oxidase family. NamA subfamily. Homotetramer. The cofactor is FMN.

The catalysed reaction is A + NADPH + H(+) = AH2 + NADP(+). Its function is as follows. Catalyzes the reduction of the double bond of an array of alpha,beta-unsaturated aldehydes and ketones. It also reduces the nitro group of nitroester and nitroaromatic compounds. It could have a role in detoxification processes. The chain is NADPH dehydrogenase from Listeria welshimeri serovar 6b (strain ATCC 35897 / DSM 20650 / CCUG 15529 / CIP 8149 / NCTC 11857 / SLCC 5334 / V8).